Reading from the N-terminus, the 452-residue chain is MKATSNLLLLWGTSLLSPSSAFVIDNHHYQHPLVVDDSSSSSISPLKIFTSSGPSANKEDAPSYRKNLLSLHKSLIEIPSISRTEQEVGKFLLDYLRNNLGYIAKAQFLEGSSSDPFSQYDDDDHSQGRFNVLAWPSSHNLSSPRVLVTSHIDVVPPFIPYHISTSSESDEEITSDAFISGRGSVDAKASVAAQIVAVEELIRAKEVDPADLMLLFVVGEEISGDGMKTFSVVYNDAEKSKKEELPRFKAAIYGEPTENKLSCGHKGHTGGVLKATGIAGHSGYPWLFKSATEILVKALAKIIDADLGSSERYGNTTVNIGTIAGGVAANVIPKEASAKLAIRVAAGNQATGADIVRSAVDKILKEVDEEAFTMEWAGGYGPVECDCDVDGFETMVASYGTDVPNFEGDHVSYLYGPGSILVAHGDDEGLKVGDLETAVEGYKTLIKHALGA.

Positions 1–28 are cleaved as a signal peptide; sequence MKATSNLLLLWGTSLLSPSSAFVIDNHH. Asn140 is a glycosylation site (N-linked (GlcNAc...) asparagine). Residue Asp186 participates in Zn(2+) binding. Glu220 serves as the catalytic Proton acceptor. Residue Glu221 participates in Zn(2+) binding. The N-linked (GlcNAc...) asparagine glycan is linked to Asn315.

The protein belongs to the peptidase M20A family. Zn(2+) serves as cofactor.

Its subcellular location is the secreted. The sequence is that of Peptidase M20 domain-containing protein SMAC_03666.2 from Sordaria macrospora (strain ATCC MYA-333 / DSM 997 / K(L3346) / K-hell).